Reading from the N-terminus, the 829-residue chain is Periplasmic nitrate reductase (829 aa).

A signal peptide (tat-type signal) is located at residues 1–29; sequence MKMTRRAFVKANAAASAAAVAGVTLPASA. The 4Fe-4S Mo/W bis-MGD-type domain occupies 41–97; that stretch reads IKWDKAPCRFCGTGCSVLVGTQNGRVVATQGDPEAPVNKGLNCIKGYFLSKIMYGKD. Residues C48, C51, C55, and C83 each contribute to the [4Fe-4S] cluster site. Residues K85, Q152, N177, C181, 214–221, 245–249, 264–266, M374, Q378, N484, 510–511, K533, D560, and 718–727 each bind Mo-bis(molybdopterin guanine dinucleotide); these read WGSNMAEM, STYYH, QSD, SD, and TGRVLEHWHT. F794 provides a ligand contact to substrate. Residues N802 and K819 each coordinate Mo-bis(molybdopterin guanine dinucleotide).

This sequence belongs to the prokaryotic molybdopterin-containing oxidoreductase family. NasA/NapA/NarB subfamily. Component of the periplasmic nitrate reductase NapAB complex composed of NapA and NapB. Requires [4Fe-4S] cluster as cofactor. The cofactor is Mo-bis(molybdopterin guanine dinucleotide). Post-translationally, predicted to be exported by the Tat system. The position of the signal peptide cleavage has not been experimentally proven.

The protein localises to the periplasm. It catalyses the reaction 2 Fe(II)-[cytochrome] + nitrate + 2 H(+) = 2 Fe(III)-[cytochrome] + nitrite + H2O. In terms of biological role, catalytic subunit of the periplasmic nitrate reductase complex NapAB. Receives electrons from NapB and catalyzes the reduction of nitrate to nitrite. The sequence is that of Periplasmic nitrate reductase from Aliivibrio fischeri (strain ATCC 700601 / ES114) (Vibrio fischeri).